The following is a 274-amino-acid chain: Hydroxyethylthiazole kinase (274 aa).

Methionine 54 is a binding site for substrate. Residues arginine 129 and threonine 175 each coordinate ATP. Residue glycine 202 participates in substrate binding.

This sequence belongs to the Thz kinase family. Mg(2+) serves as cofactor.

It catalyses the reaction 5-(2-hydroxyethyl)-4-methylthiazole + ATP = 4-methyl-5-(2-phosphooxyethyl)-thiazole + ADP + H(+). Its pathway is cofactor biosynthesis; thiamine diphosphate biosynthesis; 4-methyl-5-(2-phosphoethyl)-thiazole from 5-(2-hydroxyethyl)-4-methylthiazole: step 1/1. Its function is as follows. Catalyzes the phosphorylation of the hydroxyl group of 4-methyl-5-beta-hydroxyethylthiazole (THZ). In Granulibacter bethesdensis (strain ATCC BAA-1260 / CGDNIH1), this protein is Hydroxyethylthiazole kinase.